The sequence spans 647 residues: Denticleless protein homolog (647 aa).

WD repeat units lie at residues 48-88 (AAAV…KQSS), 95-134 (AHDN…LLGT), 137-177 (GHQC…KDGF), 209-248 (DSQQ…TAYH), 264-303 (TRKL…TTPV), 308-349 (GHSN…QAPM), and 353-393 (GHSQ…EGEN). Short sequence motifs (DDB1-binding motif) lie at residues 167 to 170 (WDTR) and 238 to 241 (WDLR). Disordered regions lie at residues 410 to 487 (QSPN…SKSP) and 534 to 647 (KRSR…RTQD). Polar residues-rich tracts occupy residues 426-443 (PSKN…SPQP) and 471-486 (KMPS…SSKS). Over residues 543–558 (LKKEDSFGLESEKRLG) the composition is skewed to basic and acidic residues. Positions 586–600 (KGSAQPKSPSSGSSQ) are enriched in low complexity.

The protein belongs to the WD repeat cdt2 family. Component of the DCX(DTL) E3 ubiquitin ligase complex, at least composed of cul4 (cul4a or cul4b), ddb1, dtl/cdt2 and rbx1.

The protein localises to the nucleus. The protein resides in the cytoplasm. It is found in the cytoskeleton. Its subcellular location is the microtubule organizing center. It localises to the centrosome. The protein localises to the chromosome. It participates in protein modification; protein ubiquitination. Substrate-specific adapter of a DCX (DDB1-CUL4-X-box) E3 ubiquitin-protein ligase complex required for cell cycle control, DNA damage response and translesion DNA synthesis. The DCX(DTL) complex, also named CRL4(CDT2) complex, mediates the polyubiquitination and subsequent degradation of CDT1, CDKN1A/p21(CIP1), KMT5A and SDE2. CDT1 degradation in response to DNA damage is necessary to ensure proper cell cycle regulation of DNA replication. CDKN1A/p21(CIP1) degradation during S phase or following UV irradiation is essential to control replication licensing. KMT5A degradation is also important for a proper regulation of mechanisms such as TGF-beta signaling, cell cycle progression, DNA repair and cell migration. Most substrates require their interaction with PCNA for their polyubiquitination: substrates interact with PCNA via their PIP-box, and those containing the 'K+4' motif in the PIP box, recruit the DCX(DTL) complex, leading to their degradation. In undamaged proliferating cells, the DCX(DTL) complex also promotes the 'Lys-164' monoubiquitination of PCNA, thereby being involved in PCNA-dependent translesion DNA synthesis. May play a role in the regulation of the circadian clock. In Danio rerio (Zebrafish), this protein is Denticleless protein homolog (dtl).